A 665-amino-acid chain; its full sequence is Sodium/glucose cotransporter 1 (665 aa).

Topologically, residues 1–24 (MDSSTLSPAVTATDAPIPSYERIR) are extracellular. Residues 25–47 (NAADISVIVIYFVVVMAVGLWAM) traverse the membrane as a helical segment. Residues 48–66 (FSTNRGTVGGFFLAGRSMV) lie on the Cytoplasmic side of the membrane. The chain crosses the membrane as a helical span at residues 67–90 (WWPIGASLFASNIGSGHFVGLAGT). The Extracellular portion of the chain corresponds to 91–95 (GAAAG). A helical membrane pass occupies residues 96–117 (IAMGGFEWNALVLVVVLGWIFV). Over 118-139 (PIYIKAGVVTMPEYLRKRFGGK) the chain is Cytoplasmic. The chain crosses the membrane as a helical span at residues 140–169 (RIQIYLSVLSLLLYIFTKISADIFSGAIFI). Residues 170–176 (NLALGLD) lie on the Extracellular side of the membrane. Residues 177 to 193 (IYLAIFILLAITALYTI) traverse the membrane as a helical segment. Residues 194-202 (TGGLAAVIY) are Cytoplasmic-facing. Residues 203–221 (TDTLQTAIMLVGSFILTGF) form a helical membrane-spanning segment. At 222 to 275 (AFNEVGGYEAFMDKYMKAIPTKVSNGNFTAKEECYTPRADSFHIFRDPITGDMP) the chain is on the extracellular side. Asparagine 248 is a glycosylation site (N-linked (GlcNAc...) asparagine). 5 cysteine pairs are disulfide-bonded: cysteine 255-cysteine 511, cysteine 255-cysteine 611, cysteine 345-cysteine 351, cysteine 355-cysteine 361, and cysteine 517-cysteine 522. A helical membrane pass occupies residues 276–295 (WPGLIFGLAILALWYWCTDQ). The Cytoplasmic portion of the chain corresponds to 296-309 (VIVQRCLSAKNMSH). The chain crosses the membrane as a helical span at residues 310–331 (VKADCTLCGYLKLLPMFLMVMP). The Extracellular segment spans residues 332-375 (GMISRILYTEKIACVLPEECQKYCGTPVGCTNIAYPTLVVELMP). A helical membrane pass occupies residues 376–406 (NGLRGLMLSVMMASLMSSLTSIFNSASTLFT). The Cytoplasmic segment spans residues 407-422 (MDIYTKIRKKASEKEL). Residues 423–444 (MIAGRLFILVLIGISIAWVPIV) form a helical membrane-spanning segment. The Extracellular segment spans residues 445-451 (QSAQSGQ). The helical transmembrane segment at 452–477 (LFDYIQSITSYLGPPIAAVFLLAIFC) threads the bilayer. Residue glutamine 457 participates in D-glucose binding. Topologically, residues 478-481 (KRVN) are cytoplasmic. The chain crosses the membrane as a helical span at residues 482–504 (EQGAFWGLILGFLIGISRMITEF). At 505 to 525 (AYGTGSCMEPSNCPKIICGVH) the chain is on the extracellular side. Residues 526–547 (YLYFAIILFVISVITILIISFL) traverse the membrane as a helical segment. Residues 548–645 (TKPIPDVHLY…TSEKPLWRTV (98 aa)) lie on the Cytoplasmic side of the membrane. Serine 585 carries the phosphoserine modification. Threonine 588 bears the Phosphothreonine mark. A helical transmembrane segment spans residues 646–663 (VNINGIILLAVAVFCHAY). Residues 664–665 (FA) are Extracellular-facing.

Belongs to the sodium:solute symporter (SSF) (TC 2.A.21) family. In terms of processing, N-glycosylation is not necessary for the cotransporter function. In terms of tissue distribution, expressed in enterocytes and enteroendocrine cells of small intestine (at protein level). Expressed in S3 segments of renal proximal tubules (at protein level). Expressed in endometrial glandular and epithelial cells (at protein level).

Its subcellular location is the apical cell membrane. It carries out the reaction D-glucose(out) + 2 Na(+)(out) = D-glucose(in) + 2 Na(+)(in). The enzyme catalyses D-galactose(out) + 2 Na(+)(out) = D-galactose(in) + 2 Na(+)(in). With respect to regulation, enhanced by the interaction with PDZK1IP1/MAP17; but unlike SLC5A2/SGLT2, PDZK1IP1 is not essential for SLC5A1 transporter activity. Possibly modulated by cholesterol binding. Functionally, electrogenic Na(+)-coupled sugar symporter that actively transports D-glucose or D-galactose at the plasma membrane, with a Na(+) to sugar coupling ratio of 2:1. Transporter activity is driven by a transmembrane Na(+) electrochemical gradient set by the Na(+)/K(+) pump. Has a primary role in the transport of dietary monosaccharides from enterocytes to blood. Responsible for the absorption of D-glucose or D-galactose across the apical brush-border membrane of enterocytes, whereas basolateral exit is provided by GLUT2. Additionally, functions as a D-glucose sensor in enteroendocrine cells, triggering the secretion of the incretins GCG and GIP that control food intake and energy homeostasis. Together with SGLT2, functions in reabsorption of D-glucose from glomerular filtrate, playing a nonredundant role in the S3 segment of the proximal tubules. Transports D-glucose into endometrial epithelial cells, controlling glycogen synthesis and nutritional support for the embryo as well as the decidual transformation of endometrium prior to conception. Acts as a water channel enabling passive water transport in response to the osmotic gradient created upon sugar and Na(+) uptake. Has high water conductivity comparable to aquaporins and therefore is expected to play an important role in transepithelial water permeability, especially in the small intestine. This is Sodium/glucose cotransporter 1 (Slc5a1) from Mus musculus (Mouse).